A 446-amino-acid chain; its full sequence is Chromosomal replication initiator protein DnaA (446 aa).

Residues Met-1 to Glu-72 form a domain I, interacts with DnaA modulators region. The domain II stretch occupies residues Glu-72–Asn-109. The domain III, AAA+ region stretch occupies residues Met-110 to Ser-326. ATP-binding residues include Gly-154, Gly-156, Lys-157, and Thr-158. Residues Ser-327–Arg-446 form a domain IV, binds dsDNA region.

This sequence belongs to the DnaA family. Oligomerizes as a right-handed, spiral filament on DNA at oriC.

It is found in the cytoplasm. Its function is as follows. Plays an essential role in the initiation and regulation of chromosomal replication. ATP-DnaA binds to the origin of replication (oriC) to initiate formation of the DNA replication initiation complex once per cell cycle. Binds the DnaA box (a 9 base pair repeat at the origin) and separates the double-stranded (ds)DNA. Forms a right-handed helical filament on oriC DNA; dsDNA binds to the exterior of the filament while single-stranded (ss)DNA is stabiized in the filament's interior. The ATP-DnaA-oriC complex binds and stabilizes one strand of the AT-rich DNA unwinding element (DUE), permitting loading of DNA polymerase. After initiation quickly degrades to an ADP-DnaA complex that is not apt for DNA replication. Binds acidic phospholipids. This is Chromosomal replication initiator protein DnaA from Bacillus licheniformis (strain ATCC 14580 / DSM 13 / JCM 2505 / CCUG 7422 / NBRC 12200 / NCIMB 9375 / NCTC 10341 / NRRL NRS-1264 / Gibson 46).